A 226-amino-acid polypeptide reads, in one-letter code: ATP synthase F(0) complex subunit a (226 aa).

6 helical membrane passes run 10 to 30 (ITPT…PPVI), 68 to 88 (WSLM…LGLL), 97 to 117 (QLSM…ILGF), 138 to 158 (IPML…ALAV), 164 to 184 (ITAG…LTSI), and 189 to 209 (AMIT…VALI).

It belongs to the ATPase A chain family. As to quaternary structure, component of the ATP synthase complex composed at least of ATP5F1A/subunit alpha, ATP5F1B/subunit beta, ATP5MC1/subunit c (homooctomer), MT-ATP6/subunit a, MT-ATP8/subunit 8, ATP5ME/subunit e, ATP5MF/subunit f, ATP5MG/subunit g, ATP5MK/subunit k, ATP5MJ/subunit j, ATP5F1C/subunit gamma, ATP5F1D/subunit delta, ATP5F1E/subunit epsilon, ATP5PF/subunit F6, ATP5PB/subunit b, ATP5PD/subunit d, ATP5PO/subunit OSCP. ATP synthase complex consists of a soluble F(1) head domain (subunits alpha(3) and beta(3)) - the catalytic core - and a membrane F(0) domain - the membrane proton channel (subunits c, a, 8, e, f, g, k and j). These two domains are linked by a central stalk (subunits gamma, delta, and epsilon) rotating inside the F1 region and a stationary peripheral stalk (subunits F6, b, d, and OSCP). Interacts with DNAJC30; interaction is direct.

Its subcellular location is the mitochondrion inner membrane. It carries out the reaction H(+)(in) = H(+)(out). Functionally, subunit a, of the mitochondrial membrane ATP synthase complex (F(1)F(0) ATP synthase or Complex V) that produces ATP from ADP in the presence of a proton gradient across the membrane which is generated by electron transport complexes of the respiratory chain. ATP synthase complex consist of a soluble F(1) head domain - the catalytic core - and a membrane F(1) domain - the membrane proton channel. These two domains are linked by a central stalk rotating inside the F(1) region and a stationary peripheral stalk. During catalysis, ATP synthesis in the catalytic domain of F(1) is coupled via a rotary mechanism of the central stalk subunits to proton translocation. With the subunit c (ATP5MC1), forms the proton-conducting channel in the F(0) domain, that contains two crucial half-channels (inlet and outlet) that facilitate proton movement from the mitochondrial intermembrane space (IMS) into the matrix. Protons are taken up via the inlet half-channel and released through the outlet half-channel, following a Grotthuss mechanism. The protein is ATP synthase F(0) complex subunit a of Cricetulus griseus (Chinese hamster).